The following is a 124-amino-acid chain: Probable S-adenosyl-L-methionine-binding protein VNG_1115H (124 aa).

One can recognise a TsaA-like domain in the interval 3–124; sequence ATPIGYADTR…PVLDLKPALD (122 aa). S-adenosyl-L-methionine contacts are provided by residues 20–22, 58–59, arginine 78, and 111–114; these read PRQ, DD, and AHGS.

This sequence belongs to the tRNA methyltransferase O family.

The sequence is that of Probable S-adenosyl-L-methionine-binding protein VNG_1115H from Halobacterium salinarum (strain ATCC 700922 / JCM 11081 / NRC-1) (Halobacterium halobium).